A 250-amino-acid polypeptide reads, in one-letter code: 1-(5-phosphoribosyl)-5-[(5-phosphoribosylamino)methylideneamino] imidazole-4-carboxamide isomerase (250 aa).

The Proton acceptor role is filled by D12. D134 serves as the catalytic Proton donor.

This sequence belongs to the HisA/HisF family.

The protein resides in the cytoplasm. It catalyses the reaction 1-(5-phospho-beta-D-ribosyl)-5-[(5-phospho-beta-D-ribosylamino)methylideneamino]imidazole-4-carboxamide = 5-[(5-phospho-1-deoxy-D-ribulos-1-ylimino)methylamino]-1-(5-phospho-beta-D-ribosyl)imidazole-4-carboxamide. Its pathway is amino-acid biosynthesis; L-histidine biosynthesis; L-histidine from 5-phospho-alpha-D-ribose 1-diphosphate: step 4/9. This chain is 1-(5-phosphoribosyl)-5-[(5-phosphoribosylamino)methylideneamino] imidazole-4-carboxamide isomerase, found in Actinobacillus pleuropneumoniae serotype 3 (strain JL03).